A 196-amino-acid polypeptide reads, in one-letter code: MILLVGLGNPGKAYAGNRHNIGFMALDQIARDYSAPPFRSKFNGLISEITLAGERCVLLAPQTYMNDSGRSVGEAARYLKIEPKDIVVLHDELDLPAGKVRVKTGGGNAGHNGLKSITAHIGNEYRRVRLGIGHPGDRALVHNYVLGDFAKSEAAWVEALCKAVAASAPLLAKGEDDAFQTKIFKDMEAALGKNVP.

Residue Y14 participates in tRNA binding. H19 functions as the Proton acceptor in the catalytic mechanism. Residues Y64, N66, and N112 each coordinate tRNA.

Belongs to the PTH family. Monomer.

The protein localises to the cytoplasm. The enzyme catalyses an N-acyl-L-alpha-aminoacyl-tRNA + H2O = an N-acyl-L-amino acid + a tRNA + H(+). In terms of biological role, hydrolyzes ribosome-free peptidyl-tRNAs (with 1 or more amino acids incorporated), which drop off the ribosome during protein synthesis, or as a result of ribosome stalling. Catalyzes the release of premature peptidyl moieties from peptidyl-tRNA molecules trapped in stalled 50S ribosomal subunits, and thus maintains levels of free tRNAs and 50S ribosomes. This chain is Peptidyl-tRNA hydrolase, found in Methylocella silvestris (strain DSM 15510 / CIP 108128 / LMG 27833 / NCIMB 13906 / BL2).